The following is a 232-amino-acid chain: 5'-methylthioadenosine/S-adenosylhomocysteine nucleosidase (232 aa).

Glutamate 12 (proton acceptor) is an active-site residue. Substrate contacts are provided by residues glycine 78, valine 152, and 173-174 (ME). The active-site Proton donor is aspartate 197.

It belongs to the PNP/UDP phosphorylase family. MtnN subfamily. Homodimer.

It carries out the reaction S-adenosyl-L-homocysteine + H2O = S-(5-deoxy-D-ribos-5-yl)-L-homocysteine + adenine. It catalyses the reaction S-methyl-5'-thioadenosine + H2O = 5-(methylsulfanyl)-D-ribose + adenine. The catalysed reaction is 5'-deoxyadenosine + H2O = 5-deoxy-D-ribose + adenine. Its pathway is amino-acid biosynthesis; L-methionine biosynthesis via salvage pathway; S-methyl-5-thio-alpha-D-ribose 1-phosphate from S-methyl-5'-thioadenosine (hydrolase route): step 1/2. Its function is as follows. Catalyzes the irreversible cleavage of the glycosidic bond in both 5'-methylthioadenosine (MTA) and S-adenosylhomocysteine (SAH/AdoHcy) to adenine and the corresponding thioribose, 5'-methylthioribose and S-ribosylhomocysteine, respectively. Also cleaves 5'-deoxyadenosine, a toxic by-product of radical S-adenosylmethionine (SAM) enzymes, into 5-deoxyribose and adenine. Thus, is required for in vivo function of the radical SAM enzymes biotin synthase and lipoic acid synthase, that are inhibited by 5'-deoxyadenosine accumulation. In Buchnera aphidicola subsp. Acyrthosiphon pisum (strain APS) (Acyrthosiphon pisum symbiotic bacterium), this protein is 5'-methylthioadenosine/S-adenosylhomocysteine nucleosidase.